The sequence spans 516 residues: Thiosulfate sulfurtransferase/rhodanese-like domain-containing protein 2 (516 aa).

The residue at position 269 (S269) is a Phosphoserine. Residues 301–396 (EQSDTILLDC…YLEEFPDGFY (96 aa)) enclose the Rhodanese domain. C355 (cysteine persulfide intermediate) is an active-site residue. Residues 490–516 (RELLQHVRQPVSPEPGPDAEEDGPVLV) form a disordered region. Acidic residues predominate over residues 506–516 (PDAEEDGPVLV).

In Pongo abelii (Sumatran orangutan), this protein is Thiosulfate sulfurtransferase/rhodanese-like domain-containing protein 2 (TSTD2).